Here is a 349-residue protein sequence, read N- to C-terminus: MSHISFKGCSFLSHLDSFQFDISSCQTIAASLVFATGGLFLLSRGLSFLRALFSIFILPGKSLSSFGPKGSWALVTGASDGIGKEYALQIARKGYNIILVSRSASKLSAVASEITSANPNILTKTVSMDFSENNDEDYEKLKDIIKDLDISILINNVGLSHSIPVPFVQTPEKEMKDIIAINCLGTLRVTQLVAPGMMQRKRGLILTMGSFGGLLPTPLLATYSGSKAFLQHWSTALASELEPYNIHVQLVVSYLVTSAMSKVRKASMTIPNPKAFVRSTLNHLGRSGGLFSYSHTSVPYWTHGLMAWGITSFLGAMSKTVLGINKSMHESIRQRALRKAARESGKKAQ.

The chain crosses the membrane as a helical span at residues 29 to 49; sequence AASLVFATGGLFLLSRGLSFL. Leucine 74, aspartate 129, aspartate 137, asparagine 156, tyrosine 223, lysine 227, valine 256, and serine 258 together coordinate NADP(+). Tyrosine 223 (proton donor) is an active-site residue. Lysine 227 functions as the Lowers pKa of active site Tyr in the catalytic mechanism.

It belongs to the short-chain dehydrogenases/reductases (SDR) family.

The protein localises to the endoplasmic reticulum membrane. It catalyses the reaction a very-long-chain (3R)-3-hydroxyacyl-CoA + NADP(+) = a very-long-chain 3-oxoacyl-CoA + NADPH + H(+). Its pathway is lipid metabolism; fatty acid biosynthesis. Functionally, component of the microsomal membrane bound fatty acid elongation system, which produces the 26-carbon very long-chain fatty acids (VLCFA) from palmitate. Catalyzes the reduction of the 3-ketoacyl-CoA intermediate that is formed in each cycle of fatty acid elongation. VLCFAs serve as precursors for ceramide and sphingolipids. The polypeptide is Very-long-chain 3-oxoacyl-CoA reductase (Coccidioides immitis (strain RS) (Valley fever fungus)).